A 478-amino-acid chain; its full sequence is E3 ubiquitin-protein ligase makorin-1 (478 aa).

3 consecutive C3H1-type zinc fingers follow at residues 51–78 (WTKQ…HDLS), 80–107 (SQSA…HTKP), and 204–231 (EMKK…HGDA). Positions 232–259 (CDMCGLQVLHPVDAAQRSQHIKSCIEAH) are makorin-type Cys-His. Residues 277 to 331 (CGICMEVVYEKANPSERRFGILSNCNHTYCLKCIRKWRSAKQFESKIIKSCPECR) form an RING-type zinc finger. The segment at 360 to 389 (AMSNKPCRYFDEGRGSCPFGGNCFYKHAYP) adopts a C3H1-type 4 zinc-finger fold.

As to quaternary structure, interacts with p53/TP53 and CDKN1A. Interacts with TERT, modulating telomere length homeostasis. Post-translationally, auto-ubiquitinated; which leads to proteasomal degradation.

It catalyses the reaction S-ubiquitinyl-[E2 ubiquitin-conjugating enzyme]-L-cysteine + [acceptor protein]-L-lysine = [E2 ubiquitin-conjugating enzyme]-L-cysteine + N(6)-ubiquitinyl-[acceptor protein]-L-lysine.. It functions in the pathway protein modification; protein ubiquitination. Its function is as follows. E3 ubiquitin ligase catalyzing the covalent attachment of ubiquitin moieties onto substrate proteins. These substrates include FILIP1, p53/TP53, CDKN1A and TERT. Keeps cells alive by suppressing p53/TP53 under normal conditions, but stimulates apoptosis by repressing CDKN1A under stress conditions. Acts as a negative regulator of telomerase. Has negative and positive effects on RNA polymerase II-dependent transcription. This is E3 ubiquitin-protein ligase makorin-1 (MKRN1) from Notamacropus eugenii (Tammar wallaby).